Here is a 448-residue protein sequence, read N- to C-terminus: Exodeoxyribonuclease 7 large subunit (448 aa).

The protein belongs to the XseA family. As to quaternary structure, heterooligomer composed of large and small subunits.

Its subcellular location is the cytoplasm. It catalyses the reaction Exonucleolytic cleavage in either 5'- to 3'- or 3'- to 5'-direction to yield nucleoside 5'-phosphates.. Bidirectionally degrades single-stranded DNA into large acid-insoluble oligonucleotides, which are then degraded further into small acid-soluble oligonucleotides. This Alcanivorax borkumensis (strain ATCC 700651 / DSM 11573 / NCIMB 13689 / SK2) protein is Exodeoxyribonuclease 7 large subunit.